We begin with the raw amino-acid sequence, 238 residues long: Protein FEV (238 aa).

Residues Ile47–Asp127 constitute a DNA-binding region (ETS). The may mediate active transcriptional repression stretch occupies residues Gln129–His238.

This sequence belongs to the ETS family. In brain, exclusively expressed in the major serotonergic neurons of the dorsal and median raphe nuclei located in the midbrain and pons. Also detected in prostate and small intestine.

It is found in the nucleus. In terms of biological role, functions as a transcriptional regulator. According to PubMed:12761502, it functions as a transcriptional repressor. Functions in the differentiation and the maintenance of the central serotonergic neurons. May play a role in cell growth. The polypeptide is Protein FEV (FEV) (Homo sapiens (Human)).